Here is a 104-residue protein sequence, read N- to C-terminus: DNA-directed RNA polymerase subunit omega (104 aa).

The disordered stretch occupies residues 60 to 104; it reads VIHPDPEGKREAVRRRAEEERLRKEEEERKIKEQIAKEKEEGEKI. Residues 63-104 show a composition bias toward basic and acidic residues; it reads PDPEGKREAVRRRAEEERLRKEEEERKIKEQIAKEKEEGEKI.

It belongs to the RNA polymerase subunit omega family. As to quaternary structure, the RNAP catalytic core consists of 2 alpha, 1 beta, 1 beta' and 1 omega subunit. When a sigma factor is associated with the core the holoenzyme is formed, which can initiate transcription.

It catalyses the reaction RNA(n) + a ribonucleoside 5'-triphosphate = RNA(n+1) + diphosphate. In terms of biological role, promotes RNA polymerase assembly. Latches the N- and C-terminal regions of the beta' subunit thereby facilitating its interaction with the beta and alpha subunits. The chain is DNA-directed RNA polymerase subunit omega from Streptococcus sanguinis (strain SK36).